We begin with the raw amino-acid sequence, 482 residues long: Exodeoxyribonuclease I (482 aa).

The Exonuclease domain occupies 13 to 194; sequence LFYDYETFGI…TSDVYATIEL (182 aa). The Mg(2+) site is built by Asp16, Glu18, and Asp187. Position 18 (Glu18) interacts with substrate. The 149-residue stretch at 203–351 folds into the ExoI SH3-like domain; that stretch reads PKLFDFFFKY…LVKNVLLKKN (149 aa). In terms of domain architecture, ExoI C-terminal spans 355–471; the sequence is NSLNVDLQIY…DLLKYVFKKY (117 aa).

As to quaternary structure, monomer. Interacts with ssb (via C-terminus); this interaction stimulates the exonuclease activity by recruiting the enzyme to its substrate. The cofactor is Mg(2+).

The catalysed reaction is Exonucleolytic cleavage in the 3'- to 5'-direction to yield nucleoside 5'-phosphates.. Its function is as follows. Degrades single-stranded DNA (ssDNA) in a highly processive manner. Also functions as a DNA deoxyribophosphodiesterase that releases deoxyribose-phosphate moieties following the cleavage of DNA at an apurinic/apyrimidinic (AP) site by either an AP endonuclease or AP lyase. In Buchnera aphidicola subsp. Schizaphis graminum (strain Sg), this protein is Exodeoxyribonuclease I (sbcB).